A 419-amino-acid chain; its full sequence is Tyrosine--tRNA ligase (419 aa).

Tyrosine 34 provides a ligand contact to L-tyrosine. A 'HIGH' region motif is present at residues 39 to 48 (PSGDSMHIGH). Residues tyrosine 168 and glutamine 172 each coordinate L-tyrosine. The short motif at 230 to 234 (KFGKS) is the 'KMSKS' region element. Residue lysine 233 coordinates ATP. The region spanning 352-418 (ANLVDWLVTL…GKKKYFLVSY (67 aa)) is the S4 RNA-binding domain.

It belongs to the class-I aminoacyl-tRNA synthetase family. TyrS type 1 subfamily. As to quaternary structure, homodimer.

The protein localises to the cytoplasm. The enzyme catalyses tRNA(Tyr) + L-tyrosine + ATP = L-tyrosyl-tRNA(Tyr) + AMP + diphosphate + H(+). In terms of biological role, catalyzes the attachment of tyrosine to tRNA(Tyr) in a two-step reaction: tyrosine is first activated by ATP to form Tyr-AMP and then transferred to the acceptor end of tRNA(Tyr). The sequence is that of Tyrosine--tRNA ligase from Listeria monocytogenes serotype 4b (strain F2365).